Reading from the N-terminus, the 328-residue chain is Ribosomal RNA small subunit methyltransferase H (328 aa).

S-adenosyl-L-methionine contacts are provided by residues 37 to 39 (GGH), Asp57, Phe83, Asp104, and Gln111.

The protein belongs to the methyltransferase superfamily. RsmH family.

Its subcellular location is the cytoplasm. The enzyme catalyses cytidine(1402) in 16S rRNA + S-adenosyl-L-methionine = N(4)-methylcytidine(1402) in 16S rRNA + S-adenosyl-L-homocysteine + H(+). In terms of biological role, specifically methylates the N4 position of cytidine in position 1402 (C1402) of 16S rRNA. This is Ribosomal RNA small subunit methyltransferase H from Neisseria meningitidis serogroup A / serotype 4A (strain DSM 15465 / Z2491).